Consider the following 287-residue polypeptide: Deoxyuridine 5'-triphosphate nucleotidohydrolase (287 aa).

173-175 (RSG) contributes to the substrate binding site. Low complexity predominate over residues 264–275 (SSSKDTSDSQMS). The disordered stretch occupies residues 264 to 287 (SSSKDTSDSQMSRGDAGLGSSGLM).

Belongs to the dUTPase family. Mg(2+) serves as cofactor.

It carries out the reaction dUTP + H2O = dUMP + diphosphate + H(+). Its function is as follows. Involved in nucleotide metabolism: produces dUMP, the immediate precursor of thymidine nucleotides and decreases the intracellular concentration of dUTP to avoid uracil incorporation into viral DNA. The chain is Deoxyuridine 5'-triphosphate nucleotidohydrolase from Saimiriine herpesvirus 2 (strain 11) (SaHV-2).